The following is a 454-amino-acid chain: T-box protein VegT (454 aa).

The segment at residues Leu-57–Glu-230 is a DNA-binding region (T-box). A compositionally biased stretch (basic and acidic residues) spans Arg-229–Leu-241. 2 disordered regions span residues Arg-229 to Val-274 and Ala-295 to Ser-358. The span at Gly-308–Lys-325 shows a compositional bias: polar residues.

Forms a repression complex on the promoters of the nodal/nr1 and siamois genes with the maternal factors tcf7l1/tcf3 and pouf5.1/oct-25. Interacts (via C-terminus) with tcf7l1/tcf3 (via N-terminus). Also interacts with the other POU-domain transcription factors pou5f1.2/oct-91 and pou5f1.3/oct-60.

It is found in the nucleus. Transcription factor required for both mesoderm and endoderm formation in the embryo; signaling determinants and concentration levels may determine which germ layer is formed. Acts together with beta-catenin to activate genes that are responsible for mesoderm induction including wnt-8, eomes t/bra, siamois, mix1 and sox17. Directly binds to promoter DNA. Patterns the mesoderm along the dorsoventral and posterior axis. Activates siamois gene transcription when alone or in combination with beta-catenin, but inhibits siamois transcription in combination with pou5f1.1/oct-25. This is T-box protein VegT from Xenopus borealis (Kenyan clawed frog).